A 467-amino-acid polypeptide reads, in one-letter code: Dimethylamine methyltransferase MtbB3 (467 aa).

A non-standard amino acid (pyrrolysine) is located at residue pyrrolysine 356.

Belongs to the dimethylamine methyltransferase family.

The enzyme catalyses Co(I)-[dimethylamine-specific corrinoid protein] + dimethylamine + H(+) = methyl-Co(III)-[dimethylamine-specific corrinoid protein] + methylamine. Its pathway is one-carbon metabolism; methanogenesis from dimethylamine. Its function is as follows. Catalyzes the transfer of a methyl group from dimethylamine to the corrinoid cofactor of MtbC. The protein is Dimethylamine methyltransferase MtbB3 (mtbB3) of Methanosarcina acetivorans (strain ATCC 35395 / DSM 2834 / JCM 12185 / C2A).